The sequence spans 189 residues: Thermostable direct hemolysin (189 aa).

An N-terminal signal peptide occupies residues 1–24 (MKYQYFAKKSFLFISMLAAFKTFA). An intrachain disulfide couples Cys-175 to Cys-185.

It belongs to the TDH hemolysin family. As to quaternary structure, homodimer.

Bacterial hemolysins are exotoxins that attack blood cell membranes and cause cell rupture by mechanisms not clearly defined. This chain is Thermostable direct hemolysin (tdh), found in Vibrio mimicus.